The primary structure comprises 159 residues: Antitoxin Xre (159 aa).

Belongs to the MbcA/ParS/Xre antitoxin family. Homodimer. Forms a complex with cognate toxin Res; the 2 toxin molecules dimerize and each contacts an Xre homodimer. Most Res-Xre contacts are between the antitoxin molecule closest to the toxin.

Its function is as follows. Probable antitoxin component of a type II toxin-antitoxin (TA) system. In vivo probably neutralizes the toxic effect of cognate toxin Res. The chain is Antitoxin Xre from Pseudomonas putida (strain ATCC 47054 / DSM 6125 / CFBP 8728 / NCIMB 11950 / KT2440).